A 780-amino-acid polypeptide reads, in one-letter code: ATP-dependent 6-phosphofructokinase, muscle type (780 aa).

Threonine 2 is modified (N-acetylthreonine). The interval 2-390 (THEEHHAAKT…NWEVYKLLAH (389 aa)) is N-terminal catalytic PFK domain 1. ATP is bound by residues glycine 25, 88–89 (RC), and 118–121 (GDGS). Aspartate 119 lines the Mg(2+) pocket. The residue at position 133 (serine 133) is a Phosphoserine. Substrate contacts are provided by residues 164 to 166 (SID), arginine 201, 208 to 210 (MGR), glutamate 264, arginine 292, and 298 to 301 (HVQR). Aspartate 166 acts as the Proton acceptor in catalysis. Position 377 is a phosphoserine (serine 377). Residues 391-401 (VRPPVSKSGSH) form an interdomain linker region. A C-terminal regulatory PFK domain 2 region spans residues 402 to 780 (TVAVMNVGAP…TRKRSGEGAV (379 aa)). Residues arginine 471 and 528–532 (TVSNN) each bind beta-D-fructose 2,6-bisphosphate. The O-linked (GlcNAc) serine glycan is linked to serine 530. Residue lysine 557 is modified to N6-(2-hydroxyisobutyryl)lysine. Beta-D-fructose 2,6-bisphosphate-binding positions include arginine 566, 573–575 (MGG), glutamate 629, arginine 655, and 661–664 (HMQQ). Serine 667 bears the Phosphoserine mark. Arginine 735 lines the beta-D-fructose 2,6-bisphosphate pocket. At serine 775 the chain carries Phosphoserine.

Belongs to the phosphofructokinase type A (PFKA) family. ATP-dependent PFK group I subfamily. Eukaryotic two domain clade 'E' sub-subfamily. In terms of assembly, homo- and heterotetramers. Phosphofructokinase (PFK) enzyme functions as a tetramer composed of different combinations of 3 types of subunits, called PFKM (M), PFKL (L) and PFKP (P). The composition of the PFK tetramer differs according to the tissue type it is present in. The kinetic and regulatory properties of the tetrameric enzyme are dependent on the subunit composition, hence can vary across tissues. Interacts (via C-terminus) with HK1 (via N-terminal spermatogenic cell-specific region). Requires Mg(2+) as cofactor. GlcNAcylation decreases enzyme activity.

It localises to the cytoplasm. The catalysed reaction is beta-D-fructose 6-phosphate + ATP = beta-D-fructose 1,6-bisphosphate + ADP + H(+). The protein operates within carbohydrate degradation; glycolysis; D-glyceraldehyde 3-phosphate and glycerone phosphate from D-glucose: step 3/4. Its activity is regulated as follows. Allosterically activated by ADP, AMP, or fructose 2,6-bisphosphate, and allosterically inhibited by ATP or citrate. Its function is as follows. Catalyzes the phosphorylation of D-fructose 6-phosphate to fructose 1,6-bisphosphate by ATP, the first committing step of glycolysis. The protein is ATP-dependent 6-phosphofructokinase, muscle type (PFKM) of Macaca fascicularis (Crab-eating macaque).